The following is a 107-amino-acid chain: Cytochrome c-550 (107 aa).

Cys11, Cys14, His15, and Met80 together coordinate heme c.

Post-translationally, binds 1 heme c group covalently per subunit.

The protein is Cytochrome c-550 of Ancylobacter novellus (Thiobacillus novellus).